A 398-amino-acid polypeptide reads, in one-letter code: Sphingosine 1-phosphate receptor 5 (398 aa).

The Extracellular segment spans residues 1-40; sequence MEPGLLRPAPVSEVIVLHYNYTGKLRGARYQPGAGLRADA. Asn-20 is a glycosylation site (N-linked (GlcNAc...) asparagine). The chain crosses the membrane as a helical span at residues 41–61; it reads VVCLAVCALIVLENLAVLVVL. Residues 62 to 70 lie on the Cytoplasmic side of the membrane; that stretch reads GRHPRFHAP. A helical transmembrane segment spans residues 71–91; it reads MFLLLGSLTLSDLLAGAAYAA. At 92-111 the chain is on the extracellular side; that stretch reads NILLSGPLTLRLSPALWFAR. The helical transmembrane segment at 112-132 threads the bilayer; sequence EGGVFVALAASVLSLLAIALE. The Cytoplasmic portion of the chain corresponds to 133 to 151; it reads RLLTMERRGPAPAARRGRT. The helical transmembrane segment at 152–172 threads the bilayer; that stretch reads LALAAGAWGVSLLLGLLPALG. The Extracellular segment spans residues 173 to 191; sequence WNCLGRLEACSTVLPLYAK. Residues 192 to 212 form a helical membrane-spanning segment; that stretch reads AYVLFCVLAFVGILAAICGLY. The Cytoplasmic portion of the chain corresponds to 213–252; it reads ARIYCQVRAKAQRLRARPGAGEGTSARARGTPRSLALLRT. The helical transmembrane segment at 253-273 threads the bilayer; sequence LSVVLVAFVACWGPLFLLLLL. The Extracellular segment spans residues 274 to 287; it reads DVACPARACPVLLQ. Residues 288 to 308 form a helical membrane-spanning segment; that stretch reads ADPFLGLAMANSLLNPIIYTF. The Cytoplasmic segment spans residues 309 to 398; sequence TNRDLRHALL…QTLVPPPAAD (90 aa). Cys-323 is lipidated: S-palmitoyl cysteine. Residues 332–398 are disordered; sequence SGTSRSPGST…QTLVPPPAAD (67 aa). Residues 334-343 show a composition bias toward low complexity; sequence TSRSPGSTLG. Phosphoserine is present on Ser-337. The span at 359–373 shows a compositional bias: basic and acidic residues; the sequence is SSSRSERSSPQRDGL. Position 381 is a phosphoserine (Ser-381).

This sequence belongs to the G-protein coupled receptor 1 family.

Its subcellular location is the cell membrane. Receptor for the lysosphingolipid sphingosine 1-phosphate (S1P). S1P is a bioactive lysophospholipid that elicits diverse physiological effect on most types of cells and tissues. Is coupled to both the G(i/O)alpha and G(12) subclass of heteromeric G-proteins. This Sus scrofa (Pig) protein is Sphingosine 1-phosphate receptor 5 (S1PR5).